Here is a 383-residue protein sequence, read N- to C-terminus: UDP-N-acetylglucosamine--N-acetylmuramyl-(pentapeptide) pyrophosphoryl-undecaprenol N-acetylglucosamine transferase (383 aa).

Residues 10–12 (TGG), Asn124, Arg165, Ser190, Ile245, and Gln290 contribute to the UDP-N-acetyl-alpha-D-glucosamine site. The segment at 364–383 (PFGQAREPGQKPARPPDLAS) is disordered.

It belongs to the glycosyltransferase 28 family. MurG subfamily.

The protein resides in the cell inner membrane. The enzyme catalyses di-trans,octa-cis-undecaprenyl diphospho-N-acetyl-alpha-D-muramoyl-L-alanyl-D-glutamyl-meso-2,6-diaminopimeloyl-D-alanyl-D-alanine + UDP-N-acetyl-alpha-D-glucosamine = di-trans,octa-cis-undecaprenyl diphospho-[N-acetyl-alpha-D-glucosaminyl-(1-&gt;4)]-N-acetyl-alpha-D-muramoyl-L-alanyl-D-glutamyl-meso-2,6-diaminopimeloyl-D-alanyl-D-alanine + UDP + H(+). It functions in the pathway cell wall biogenesis; peptidoglycan biosynthesis. Its function is as follows. Cell wall formation. Catalyzes the transfer of a GlcNAc subunit on undecaprenyl-pyrophosphoryl-MurNAc-pentapeptide (lipid intermediate I) to form undecaprenyl-pyrophosphoryl-MurNAc-(pentapeptide)GlcNAc (lipid intermediate II). This Anaeromyxobacter sp. (strain K) protein is UDP-N-acetylglucosamine--N-acetylmuramyl-(pentapeptide) pyrophosphoryl-undecaprenol N-acetylglucosamine transferase.